The following is a 207-amino-acid chain: Large ribosomal subunit protein uL4 (207 aa).

Positions 48 to 85 are disordered; sequence THKVKNRSEVRGGGRKPWRQKGTGRARQGSIRSPQWRG. A compositionally biased stretch (basic residues) spans 60–71; that stretch reads GGRKPWRQKGTG.

Belongs to the universal ribosomal protein uL4 family. As to quaternary structure, part of the 50S ribosomal subunit.

One of the primary rRNA binding proteins, this protein initially binds near the 5'-end of the 23S rRNA. It is important during the early stages of 50S assembly. It makes multiple contacts with different domains of the 23S rRNA in the assembled 50S subunit and ribosome. In terms of biological role, forms part of the polypeptide exit tunnel. This chain is Large ribosomal subunit protein uL4, found in Bacillus subtilis (strain 168).